We begin with the raw amino-acid sequence, 381 residues long: MTEPAIRYRLIKKDKHTGARLGELITPHGTFPTPMFMPVGTLATVKTMSPEELKEMGAGVILSNTYHLWLRPGEDLVEEAGGLHKFMNWDQPILTDSGGFQVFSLSDMRKIEEEGVHFRNHLNGSKMFLSPEKAINIQNKLGSDIMMSFDECPPFDESYEYVKRSIERTSRWAERGLKAHANPDRQGLFGIVQGAGFEDLRRQSAKDLVSMDFPGYSIGGLSVGESKEEMNRVLDFTTPLIPENKPRYLMGVGAPDSLIDGVIRGIDMFDCVLPTRIARNGTCMTSQGRLVVKNAQYARDFRPLDEKCDCYVCRNYTRAYIRHLIKCDETFGIRLTSYHNLYFLLDLMKNVRQAIMDDNLLEFRQAFFEEYGFNKANAKSF.

D96 (proton acceptor) is an active-site residue. Residues 96-100 (DSGGF), D150, Q193, and G220 contribute to the substrate site. The RNA binding stretch occupies residues 251 to 257 (GVGAPDS). The active-site Nucleophile is D270. Residues 275–279 (TRIAR) are RNA binding; important for wobble base 34 recognition. Residues C308, C310, C313, and H339 each contribute to the Zn(2+) site.

The protein belongs to the queuine tRNA-ribosyltransferase family. Homodimer. Within each dimer, one monomer is responsible for RNA recognition and catalysis, while the other monomer binds to the replacement base PreQ1. Zn(2+) serves as cofactor.

The enzyme catalyses 7-aminomethyl-7-carbaguanine + guanosine(34) in tRNA = 7-aminomethyl-7-carbaguanosine(34) in tRNA + guanine. It participates in tRNA modification; tRNA-queuosine biosynthesis. Catalyzes the base-exchange of a guanine (G) residue with the queuine precursor 7-aminomethyl-7-deazaguanine (PreQ1) at position 34 (anticodon wobble position) in tRNAs with GU(N) anticodons (tRNA-Asp, -Asn, -His and -Tyr). Catalysis occurs through a double-displacement mechanism. The nucleophile active site attacks the C1' of nucleotide 34 to detach the guanine base from the RNA, forming a covalent enzyme-RNA intermediate. The proton acceptor active site deprotonates the incoming PreQ1, allowing a nucleophilic attack on the C1' of the ribose to form the product. After dissociation, two additional enzymatic reactions on the tRNA convert PreQ1 to queuine (Q), resulting in the hypermodified nucleoside queuosine (7-(((4,5-cis-dihydroxy-2-cyclopenten-1-yl)amino)methyl)-7-deazaguanosine). The sequence is that of Queuine tRNA-ribosyltransferase from Enterococcus faecalis (strain ATCC 700802 / V583).